Consider the following 352-residue polypeptide: Secreted RxLR effector protein 122 (352 aa).

The first 21 residues, 1–21, serve as a signal peptide directing secretion; that stretch reads MRGAYYVLIALLVVASSQTSA. A RxLR-dEER motif is present at residues 48–65; the sequence is QFLRGSRNVPGDLAHEER. Positions 280 to 290 are enriched in low complexity; sequence RGGTTGASRGT. The segment at 280 to 352 is disordered; it reads RGGTTGASRG…VEPEGHRSKP (73 aa). Polar residues predominate over residues 302–315; it reads AASTSKGKSSVFTE.

This sequence belongs to the RxLR effector family.

Its subcellular location is the secreted. It localises to the host nucleus. Functionally, secreted effector that acts as an elicitor that induces cell death in host plant cells. The sequence is that of Secreted RxLR effector protein 122 from Plasmopara viticola (Downy mildew of grapevine).